The primary structure comprises 409 residues: Elongation factor Tu (409 aa).

Residues 10–214 form the tr-type G domain; that stretch reads KPHVNIGTIG…AVDAYIPTPE (205 aa). The interval 19-26 is G1; the sequence is GHVDHGKT. Residue 19–26 coordinates GTP; that stretch reads GHVDHGKT. Thr-26 provides a ligand contact to Mg(2+). The G2 stretch occupies residues 60–64; it reads GITIN. A G3 region spans residues 81–84; the sequence is DCPG. Residues 81 to 85 and 136 to 139 contribute to the GTP site; these read DCPGH and NKKD. The segment at 136–139 is G4; sequence NKKD. Positions 174–176 are G5; that stretch reads SAL.

The protein belongs to the TRAFAC class translation factor GTPase superfamily. Classic translation factor GTPase family. EF-Tu/EF-1A subfamily. Monomer.

The protein localises to the cytoplasm. The catalysed reaction is GTP + H2O = GDP + phosphate + H(+). Functionally, GTP hydrolase that promotes the GTP-dependent binding of aminoacyl-tRNA to the A-site of ribosomes during protein biosynthesis. The protein is Elongation factor Tu of Gloeobacter violaceus (strain ATCC 29082 / PCC 7421).